Reading from the N-terminus, the 505-residue chain is ATP synthase subunit alpha, chloroplastic (505 aa).

ATP is bound at residue 170–177 (GDRQTGKT).

This sequence belongs to the ATPase alpha/beta chains family. As to quaternary structure, F-type ATPases have 2 components, CF(1) - the catalytic core - and CF(0) - the membrane proton channel. CF(1) has five subunits: alpha(3), beta(3), gamma(1), delta(1), epsilon(1). CF(0) has four main subunits: a, b, b' and c.

It localises to the plastid. It is found in the chloroplast thylakoid membrane. It catalyses the reaction ATP + H2O + 4 H(+)(in) = ADP + phosphate + 5 H(+)(out). Produces ATP from ADP in the presence of a proton gradient across the membrane. The alpha chain is a regulatory subunit. The protein is ATP synthase subunit alpha, chloroplastic of Phaeodactylum tricornutum (strain CCAP 1055/1).